Reading from the N-terminus, the 145-residue chain is Basic phospholipase A2 beta-bungarotoxin A-AL1 chain (145 aa).

The first 17 residues, 1-17 (MLIFLWCGAVCVSLLGA), serve as a signal peptide directing secretion. A propeptide spanning residues 18-25 (ANIPPHPL) is cleaved from the precursor. 5 disulfide bridges follow: Cys-52-Cys-144, Cys-54-Cys-70, Cys-76-Cys-118, Cys-86-Cys-111, and Cys-104-Cys-116. Positions 53, 55, and 57 each coordinate Ca(2+). The active site involves His-73. Asp-119 is a catalytic residue.

This sequence belongs to the phospholipase A2 family. Group I subfamily. G49 sub-subfamily. As to quaternary structure, heterodimer; disulfide-linked. The A chains have phospholipase A2 activity and the B chains show homology with the basic protease inhibitors. Ca(2+) is required as a cofactor. This enzyme lacks one of the seven disulfide bonds found in similar PLA2 proteins. In terms of tissue distribution, expressed by the venom gland.

It localises to the secreted. The enzyme catalyses a 1,2-diacyl-sn-glycero-3-phosphocholine + H2O = a 1-acyl-sn-glycero-3-phosphocholine + a fatty acid + H(+). Functionally, snake venom phospholipase A2 (PLA2) that inhibits neuromuscular transmission by blocking acetylcholine release from the nerve termini. PLA2 catalyzes the calcium-dependent hydrolysis of the 2-acyl groups in 3-sn-phosphoglycerides. The protein is Basic phospholipase A2 beta-bungarotoxin A-AL1 chain of Bungarus multicinctus (Many-banded krait).